Here is a 668-residue protein sequence, read N- to C-terminus: Calpain-13 (668 aa).

Residues 34 to 331 (LFIDDTFPAE…FSCLYICSQF (298 aa)) enclose the Calpain catalytic domain. Catalysis depends on residues cysteine 93, histidine 249, and asparagine 273. EF-hand domains follow at residues 537–572 (FSLD…LIHC) and 635–668 (IRLE…VMYS).

It belongs to the peptidase C2 family.

Functionally, probable non-lysosomal thiol-protease. This Rattus norvegicus (Rat) protein is Calpain-13 (Capn13).